The following is a 931-amino-acid chain: MRKGLRATAARCGLGLGYLLQMLVLPALALLSASGTGSAAQDDDFFHELPETFPSDPPEPLPHFLIEPEEAYIVKNKPVNLYCKASPATQIYFKCNSEWVHQKDHVVDERVDETSGLIVREVSIEISRQQVEELFGPEDYWCQCVAWSSAGTTKSRKAYVRIAYLRKTFEQEPLGKEVSLEQEVLLQCRPPEGIPMAEVEWLKNEDIIDPVEDRNFYITIDHNLIIKQARLSDTANYTCVAKNIVAKRKSTTATVIVYVNGGWSTWAEWSVCNSRCGRGYQKRTRTCTNPAPLNGGAFCEGQSVQKIACTTLCPVDGRWTSWSKWSTCGTECTHWRRRECTAPAPKNGGKDCDGLVLQSKNCTDGLCMQAAPDSDDVALYVGIVIAVTVCLAITVVVALFVYRKNHRDFESNIIDSSALNGGFQPVNIKAARQDLLAVPPDLTSAAAMYRGPVYALHDVSDKIPMTNSPILDPLPNLKIKVYNSSGAVTPQDDLAEFSSKLSPQMTQSLLENEALNLKNQSLARQTDPSCTAFGTFNSLGGHLIIPNSGVSLLIPAGAIPQGRVYEMYVTVHRKENMRPPMEDSQTLLTPVVSCGPPGALLTRPVILTLHHCADPNTEDWKIQLKNQAVQGQWEDVVVVGEENFTTPCYIQLDAEACHILTENLSTYALVGQSTTKAAAKRLKLAIFGPLCCSSLEYSIRVYCLDDTQDALKEVLQLERQMGGQLLEEPKALHFKGSIHNLRLSIHDITHSLWKSKLLAKYQEIPFYHIWSGSQRNLHCTFTLERLSLNTVELVCKLCVRQVEGEGQIFQLNCTVSEEPTGIDLPLLDPASTITTVTGPSAFSIPLPIRQKLCSSLDAPQTRGHDWRMLAHKLNLDRYLNYFATKSSPTGVILDLWEAQNFPDGNLSMLAAVLEEMGRHETVVSLAAEGQY.

The first 40 residues, 1-40, serve as a signal peptide directing secretion; the sequence is MRKGLRATAARCGLGLGYLLQMLVLPALALLSASGTGSAA. Over 41 to 380 the chain is Extracellular; sequence QDDDFFHELP…APDSDDVALY (340 aa). In terms of domain architecture, Ig-like spans 62–159; that stretch reads PHFLIEPEEA…AGTTKSRKAY (98 aa). 9 disulfide bridges follow: Cys-83–Cys-144, Cys-95–Cys-142, Cys-188–Cys-239, Cys-272–Cys-309, Cys-276–Cys-313, Cys-287–Cys-299, Cys-328–Cys-362, Cys-332–Cys-367, and Cys-340–Cys-352. Residues 161 to 256 enclose the Ig-like C2-type domain; the sequence is RIAYLRKTFE…KRKSTTATVI (96 aa). N-linked (GlcNAc...) asparagine glycosylation is present at Asn-236. 2 consecutive TSP type-1 domains span residues 260–314 and 316–368; these read NGGW…TLCP and DGRW…GLCM. A glycan (N-linked (GlcNAc...) asparagine) is linked at Asn-361. Residues 381-401 traverse the membrane as a helical segment; that stretch reads VGIVIAVTVCLAITVVVALFV. Residues 402–931 lie on the Cytoplasmic side of the membrane; sequence YRKNHRDFES…VVSLAAEGQY (530 aa). A required for netrin-mediated axon repulsion of neuronal growth cones region spans residues 402–931; sequence YRKNHRDFES…VVSLAAEGQY (530 aa). Ser-502 bears the Phosphoserine mark. In terms of domain architecture, ZU5 spans 530–673; the sequence is CTAFGTFNSL…LSTYALVGQS (144 aa). The residue at position 568 (Tyr-568) is a Phosphotyrosine. Residues 694–712 form an interaction with DCC region; the sequence is SLEYSIRVYCLDDTQDALK. Residues 850-929 form the Death domain; the sequence is QKLCSSLDAP…ETVVSLAAEG (80 aa).

Belongs to the unc-5 family. In terms of assembly, interacts with DCC (via cytoplasmic domain). Interacts (tyrosine phosphorylated form) with PTPN11. Interacts (via extracellular domain) with FLRT3 (via extracellular domain). Interacts (via Ig-like C2-type domain) with DSCAM (via extracellular domain). Interacts (via death domain) with DAPK1. Interacts (via cytoplasmic domain) with TUBB3; this interaction is decreased by NTN1/Netrin-1. Proteolytically cleaved by caspases during apoptosis. The cleavage does not take place when the receptor is associated with netrin ligand. Its cleavage by caspases is required to induce apoptosis. In terms of processing, phosphorylated on different cytoplasmic tyrosine residues. Phosphorylation of Tyr-568 leads to an interaction with PTPN11 phosphatase, suggesting that its activity is regulated by phosphorylation/dephosphorylation. Tyrosine phosphorylation is netrin-dependent. Detected in brain (at protein level). Mainly expressed in brain. Also expressed in kidney. Not expressed in developing or adult lung.

It localises to the cell membrane. The protein localises to the cell surface. The protein resides in the synapse. Its subcellular location is the synaptosome. It is found in the cell projection. It localises to the axon. The protein localises to the dendrite. The protein resides in the growth cone. Its subcellular location is the lamellipodium. It is found in the filopodium. Functionally, receptor for netrin required for axon guidance. Mediates axon repulsion of neuronal growth cones in the developing nervous system upon ligand binding. NTN1/Netrin-1 binding might cause dissociation of UNC5C from polymerized TUBB3 in microtubules and thereby lead to increased microtubule dynamics and axon repulsion. Axon repulsion in growth cones may also be caused by its association with DCC that may trigger signaling for repulsion. Might also collaborate with DSCAM in NTN1-mediated axon repulsion independently of DCC. Also involved in corticospinal tract axon guidance independently of DCC. Involved in dorsal root ganglion axon projection towards the spinal cord. It also acts as a dependence receptor required for apoptosis induction when not associated with netrin ligand. In Rattus norvegicus (Rat), this protein is Netrin receptor UNC5C (Unc5c).